A 216-amino-acid chain; its full sequence is Uracil phosphoribosyltransferase (216 aa).

Residues R85, R110, and 135–143 contribute to the 5-phospho-alpha-D-ribose 1-diphosphate site; that span reads DPMVATGYS. Residues I200 and 205 to 207 contribute to the uracil site; that span reads GDA. Residue D206 participates in 5-phospho-alpha-D-ribose 1-diphosphate binding.

Belongs to the UPRTase family. Requires Mg(2+) as cofactor.

The catalysed reaction is UMP + diphosphate = 5-phospho-alpha-D-ribose 1-diphosphate + uracil. The protein operates within pyrimidine metabolism; UMP biosynthesis via salvage pathway; UMP from uracil: step 1/1. Its activity is regulated as follows. Allosterically activated by GTP. Functionally, catalyzes the conversion of uracil and 5-phospho-alpha-D-ribose 1-diphosphate (PRPP) to UMP and diphosphate. The protein is Uracil phosphoribosyltransferase of Burkholderia thailandensis (strain ATCC 700388 / DSM 13276 / CCUG 48851 / CIP 106301 / E264).